The chain runs to 109 residues: Putative double-stranded DNA mimic protein YciU (109 aa).

This sequence belongs to the putative dsDNA mimic protein family.

In terms of biological role, may act as a double-stranded DNA (dsDNA) mimic. Probably regulates the activity of a dsDNA-binding protein. The polypeptide is Putative double-stranded DNA mimic protein YciU (Shigella boydii serotype 18 (strain CDC 3083-94 / BS512)).